The chain runs to 613 residues: Probable Xaa-Pro aminopeptidase P (613 aa).

4 residues coordinate Mn(2+): D408, D419, E517, and E531.

It belongs to the peptidase M24B family. Requires Mn(2+) as cofactor.

It carries out the reaction Release of any N-terminal amino acid, including proline, that is linked to proline, even from a dipeptide or tripeptide.. In terms of biological role, catalyzes the removal of a penultimate prolyl residue from the N-termini of peptides. The sequence is that of Probable Xaa-Pro aminopeptidase P (ampp) from Penicillium rubens (strain ATCC 28089 / DSM 1075 / NRRL 1951 / Wisconsin 54-1255) (Penicillium chrysogenum).